Consider the following 619-residue polypeptide: DNA mismatch repair protein MutL (619 aa).

A disordered region spans residues Gly-358–Gly-401.

The protein belongs to the DNA mismatch repair MutL/HexB family.

In terms of biological role, this protein is involved in the repair of mismatches in DNA. It is required for dam-dependent methyl-directed DNA mismatch repair. May act as a 'molecular matchmaker', a protein that promotes the formation of a stable complex between two or more DNA-binding proteins in an ATP-dependent manner without itself being part of a final effector complex. The protein is DNA mismatch repair protein MutL of Klebsiella pneumoniae (strain 342).